The primary structure comprises 547 residues: MTKTDPAPMAPPPRGEEEEEEEEDEPVPEAPSPTQERRQKPVVHPSAPAPLPKDYAFTFFDPNDPACQEILFDPQTTIPELFAIVRQWVPQVQHKIDVIGNEILRRGCHVNDRDGLTDMTLLHYACKAGAHGVGDPAAAVRLSQQLLALGADVTLRSRWTNMNALHYAAYFDVPDLVRVLLKGARPRVVNSTCSDFNHGSALHIAASSLCLGAAKCLLEHGANPALRNRKGQVPAEVVPDPMDMSLDKAEAALVAKELRTLLEEAVPLSCALPKVTLPNYDNVPGNLMLSALGLRLGDRVLLDGQKTGTLRFCGTTEFASGQWVGVELDEPEGKNDGSVGGVRYFICPPKQGLFASVSKISKAVDAPPSSVTSTPRTPRMDFSRVTGKGRREHKGKKKTPSSPSLGSLQQRDRAKAEVGDQVLVAGQKQGIVRFYGKTDFAPGYWYGIELDQPTGKHDGSVFGVRYFTCPPRHGVFAPASRIQRIGGSTDSPGDSVGAKKVHQVTMTQPKRTFTTVRTPKDIASENSISRLLFCCWFPWMLRAEMQS.

The disordered stretch occupies residues 1–49 (MTKTDPAPMAPPPRGEEEEEEEEDEPVPEAPSPTQERRQKPVVHPSAPA). The span at 16–27 (EEEEEEEEDEPV) shows a compositional bias: acidic residues. ANK repeat units lie at residues 117-155 (TDMT…DVTL), 160-189 (TNMN…PRVV), and 197-226 (NHGS…NPAL). The CAP-Gly 1 domain maps to 314–356 (GTTEFASGQWVGVELDEPEGKNDGSVGGVRYFICPPKQGLFAS). The segment at 365 to 413 (DAPPSSVTSTPRTPRMDFSRVTGKGRREHKGKKKTPSSPSLGSLQQRDR) is disordered. Over residues 367-377 (PPSSVTSTPRT) the composition is skewed to low complexity. Thr-374 carries the phosphothreonine modification. Basic residues predominate over residues 387-399 (GKGRREHKGKKKT). Residues 400–409 (PSSPSLGSLQ) are compositionally biased toward polar residues. At Ser-401 the chain carries Phosphoserine. The CAP-Gly 2 domain occupies 436-478 (GKTDFAPGYWYGIELDQPTGKHDGSVFGVRYFTCPPRHGVFAP). Residues 488–547 (STDSPGDSVGAKKVHQVTMTQPKRTFTTVRTPKDIASENSISRLLFCCWFPWMLRAEMQS) are goLD. S-palmitoyl cysteine attachment occurs at residues Cys-534 and Cys-535.

As to quaternary structure, homodimer. Interacts with AKT1 and AKT2; when AKT1 and AKT2 are phosphorylated and activated, affinity is higher for AKT2. Interacts with ZDHHC13 (via ANK repeats). Interacts with ZDHHC17 (via ANK repeats). In terms of processing, palmitoylation by ZDHHC17 regulates association with the plasma membrane.

Its subcellular location is the cell membrane. It localises to the cytoplasm. The protein resides in the golgi apparatus. It is found in the golgi stack. Functionally, functions as a cytoplasmic linker protein. Involved in TGN-endosome dynamics. May modulate the cellular compartmentalization of AKT kinase family and promote its cell membrane localization, thereby playing a role in glucose transport in adipocytes. This is CAP-Gly domain-containing linker protein 3 (CLIP3) from Pongo abelii (Sumatran orangutan).